Reading from the N-terminus, the 1088-residue chain is TBC1 domain family member 31 (1088 aa).

Positions 1 to 20 (MQTTDLGNKESGKIWHRKPN) are disordered. 7 WD repeats span residues 33 to 74 (HVDA…LNRN), 75 to 116 (RFDL…TGAK), 117 to 157 (ELVS…LDTF), 158 to 200 (QRKR…SDTL), 201 to 248 (ACKY…SKQL), 249 to 296 (FRII…IQTC), and 297 to 334 (KLVFDIGSHDNGIVTSSVSPNGRYITSVMENGSLNIYS). The interval 356–381 (SKDKDSTGNKSGVSGASQEKVRVSSG) is disordered. The segment covering 363 to 372 (GNKSGVSGAS) has biased composition (polar residues). A Rab-GAP TBC domain is found at 432–607 (EYPAKYRMFI…RLFDNVFSNH (176 aa)). Coiled coils occupy residues 736 to 903 (QQQE…VETD) and 1048 to 1076 (RGELENRERALISEVRELRQKLATQARRK).

It is found in the cytoplasm. Its subcellular location is the cytoskeleton. The protein resides in the microtubule organizing center. It localises to the centrosome. The protein localises to the centriolar satellite. It is found in the cilium basal body. In terms of biological role, molecular adapter which is involved in cilium biogenesis. Part of a functional complex including OFD1 a centriolar protein involved in cilium assembly. Could regulate the cAMP-dependent phosphorylation of OFD1, and its subsequent ubiquitination by PJA2 which ultimately leads to its proteasomal degradation. This Xenopus tropicalis (Western clawed frog) protein is TBC1 domain family member 31.